The chain runs to 324 residues: Alkanal monooxygenase beta chain (324 aa).

Belongs to the bacterial luciferase oxidoreductase family. As to quaternary structure, heterodimer of an alpha and a beta chain.

It catalyses the reaction a long-chain fatty aldehyde + FMNH2 + O2 = a long-chain fatty acid + hnu + FMN + H2O + 2 H(+). Light-emitting reaction in luminous bacteria. The specific role of the beta subunit is unknown, but it is absolutely required for bioluminescence activity. This is Alkanal monooxygenase beta chain (luxB) from Photorhabdus luminescens (Xenorhabdus luminescens).